We begin with the raw amino-acid sequence, 259 residues long: MVEKMIDKQLMQKRFSERATTYDRFANVQKKMAHALMKRIVHPPQTILEIGCGTGYLTKLLHDAYPKAELTAVDIAPGMIEKAKQRLGDAPITWLCADIEEAELYEMYDLIISNATFQWLTAPKQTIAKLAKQRNERGQLLFSTFGDRTFHELHTSFAYALAIQQIDEPLRIGPSFPTFSEWLAMHDQARGHEQFEVEYFPSVRDFFLSLRHIGATNSTSGRYCQRPSVFKAMMHEYEQRFSEQGLIRATYHCIFIDIT.

This sequence belongs to the methyltransferase superfamily.

It catalyses the reaction malonyl-[ACP] + S-adenosyl-L-methionine = malonyl-[ACP] methyl ester + S-adenosyl-L-homocysteine. It functions in the pathway cofactor biosynthesis; biotin biosynthesis. Functionally, converts the free carboxyl group of a malonyl-thioester to its methyl ester by transfer of a methyl group from S-adenosyl-L-methionine (SAM). It allows to synthesize pimeloyl-ACP via the fatty acid synthetic pathway. This Anoxybacillus flavithermus (strain DSM 21510 / WK1) protein is Malonyl-[acyl-carrier protein] O-methyltransferase.